We begin with the raw amino-acid sequence, 199 residues long: Putative lectin L633 (199 aa).

An N-terminal signal peptide occupies residues 1 to 25 (MNILLLLMLLTSIILLVILIFLAYN). A compositionally biased stretch (polar residues) spans 35 to 48 (CITPAPESQSISPD). A disordered region spans residues 35–74 (CITPAPESQSISPDQTTQLQTTTPVTSTPSNPTPTTIIPN). Over residues 49-73 (QTTQLQTTTPVTSTPSNPTPTTIIP) the composition is skewed to low complexity. The region spanning 84 to 195 (EIVSNGDNVL…LGQELWCATR (112 aa)) is the Bulb-type lectin domain. Asn-121 is a glycosylation site (N-linked (GlcNAc...) asparagine; by host).

It localises to the secreted. This chain is Putative lectin L633, found in Acanthamoeba polyphaga (Amoeba).